The following is a 682-amino-acid chain: Acyl-CoA synthetase short-chain family member 3, mitochondrial (682 aa).

The transit peptide at 1-29 directs the protein to the mitochondrion; that stretch reads MKPSWLQCRKVTGAGTLGAPLPGSPSVRG. 222–225 contributes to the CoA binding site; it reads EPGR. ATP-binding positions include 420–422 and 441–446; these read GER and DHWWQT. Residue Lys513 is modified to N6-succinyllysine. Residue Lys519 is modified to N6-acetyllysine. Residues Asp534, Arg549, and Arg560 each contribute to the ATP site. Arg619 contributes to the CoA binding site.

This sequence belongs to the ATP-dependent AMP-binding enzyme family.

The protein localises to the mitochondrion matrix. It carries out the reaction acetate + ATP + CoA = acetyl-CoA + AMP + diphosphate. The catalysed reaction is propanoate + ATP + CoA = propanoyl-CoA + AMP + diphosphate. It catalyses the reaction butanoate + ATP + CoA = butanoyl-CoA + AMP + diphosphate. Functionally, catalyzes the synthesis of acetyl-CoA from short-chain fatty acids. Propionate is the preferred substrate but can also utilize acetate and butyrate with a much lower affinity. This chain is Acyl-CoA synthetase short-chain family member 3, mitochondrial (Acss3), found in Mus musculus (Mouse).